Here is a 279-residue protein sequence, read N- to C-terminus: Pantothenate synthetase (279 aa).

Position 26–33 (26–33) interacts with ATP; the sequence is MGNLHEGH. H33 (proton donor) is an active-site residue. Residue Q57 coordinates (R)-pantoate. Position 57 (Q57) interacts with beta-alanine. 144-147 is an ATP binding site; the sequence is GKKD. Q150 lines the (R)-pantoate pocket. Residues V173 and 181-184 each bind ATP; that span reads LSSR.

It belongs to the pantothenate synthetase family. Homodimer.

It localises to the cytoplasm. It carries out the reaction (R)-pantoate + beta-alanine + ATP = (R)-pantothenate + AMP + diphosphate + H(+). Its pathway is cofactor biosynthesis; (R)-pantothenate biosynthesis; (R)-pantothenate from (R)-pantoate and beta-alanine: step 1/1. Its function is as follows. Catalyzes the condensation of pantoate with beta-alanine in an ATP-dependent reaction via a pantoyl-adenylate intermediate. This chain is Pantothenate synthetase, found in Burkholderia orbicola (strain MC0-3).